The following is a 141-amino-acid chain: Large-conductance mechanosensitive channel (141 aa).

Transmembrane regions (helical) follow at residues 14 to 34 (VVDL…VNSL), 38 to 58 (VIMP…YYIP), and 82 to 102 (GQFL…FMVI).

It belongs to the MscL family. Homopentamer.

The protein localises to the cell inner membrane. Channel that opens in response to stretch forces in the membrane lipid bilayer. May participate in the regulation of osmotic pressure changes within the cell. This chain is Large-conductance mechanosensitive channel, found in Methylorubrum extorquens (strain CM4 / NCIMB 13688) (Methylobacterium extorquens).